The chain runs to 922 residues: TBC1 domain family member 2A (922 aa).

The segment at 1–37 (MEDAPERTPSSSESTQPPGLAREPEVVSPGDSEGCAR) is disordered. The tract at residues 1–168 (MEDAPERTPS…AENGPTLHLK (168 aa)) is interaction with CADH1. Polar residues predominate over residues 8–17 (TPSSSESTQP). The PH domain maps to 43 to 141 (PKKLCGYLSK…WLQQLQMKRW (99 aa)). Residues 228–297 (NKQAQAAAHG…KRQSNTFPFF (70 aa)) form a disordered region. Over residues 262 to 271 (LPEKEPEDPA) the composition is skewed to basic and acidic residues. Over residues 275 to 295 (PRSSVPSGPTQKPKRQSNTFP) the composition is skewed to polar residues. The interaction with RAC1 stretch occupies residues 298 to 435 (SDGLARSRTA…QKLTEDLAQP (138 aa)). Coiled coils occupy residues 302-333 (ARSRTAQEKVAALEQQVLMLTKELKSQKELVI), 362-417 (LELV…NHAK), and 443-476 (FLSQQERMEHLKDDMEAYRTQNRFLNSEIHQVTK). The 193-residue stretch at 619–811 (GVPREHRPRV…RVWDAFLYEG (193 aa)) folds into the Rab-GAP TBC domain. Residues 869–904 (MKQLRQLRAAHRERLEAELRELELLKVEYLQRRASL) are a coiled coil. Residue serine 914 is modified to Phosphoserine.

As to quaternary structure, interacts with activated RAC1 and CDH1.

The protein localises to the cytoplasm. It localises to the cytoplasmic vesicle. The protein resides in the cell junction. Acts as a GTPase-activating protein for RAB7A. Signal effector acting as a linker between RAC1 and RAB7A, leading to RAB7A inactivation and subsequent inhibition of cadherin degradation and reduced cell-cell adhesion. The chain is TBC1 domain family member 2A (Tbc1d2) from Mus musculus (Mouse).